Consider the following 651-residue polypeptide: MALIRLVAPGRVFSDLASMVAYPNFQVQDKITLLGSAGGDFTFTTTASVVDNGTVFAVPGGYLLRKFVGPAYSSWFSNWTGIVTFMSAPNRHLVVDTVLQATSVLNIKSNSTLEFTDTGRILPDAAVARQVLNIIGSAPSVFVPLAADAAAGSKVITVAAGALSAVKGTYLYLRSNGLCDGGPNTYGVKISQIRKVVGVSTSGGVTSIRLDKALHYNYYLSDAAEVGIPTMVENVTLVSPYINEFGYDDLNRFFTIGISANFAADLHIQDGVIIGNKRPGASDIEGRSAIKFNNCVDSTVKGTCFYNIGWYGVEVLGCSEDTEVHDIHAMDVRHAISLNWQSTADGDKWGEPIEFLGVNCEAYNTTQAGFDTHDIGKRVKFVRCVSYDSADDGFQARTNGVEYLNCRAYRAAMDGFASNTGVAFPIYRECLAYDNVRSGFNCSYGGGYVYDCEAHGSQDGVRINGGRVKGGRYTRNSRSHIFVTKDVAETAQTSLEIDGVRMRYDGTGRAAYFHGTMGIDPTLVSMSNNDMTGHGLFWALLSGYTVQPTPPRMSRNLLDDTGIRGVATLVAGKATVNARVRGNFGSVANSFKWVSEVKLTRLTFPSSAGALTVTSVAQNQDVPTPNPDLNSFVIRSSNTADVSQVAWEVYL.

Residues 71–559 form an interaction with the host trisaccharides on the capsule region; it reads AYSSWFSNWT…PPRMSRNLLD (489 aa).

It belongs to the K1-specific depolymerase family. Homotrimer.

It is found in the virion. Functionally, functions as a receptor binding protein (RBP) and mediates the attachment to the host capsular exopolysaccharides. Displays a lyase activity that specifically degrades the K1-type polysaccharides of Klebsiella pneumoniae capsule. In Klebsiella pneumoniae (Bacteriophage KpV71), this protein is Depolymerase, capsule K1-specific.